A 1328-amino-acid polypeptide reads, in one-letter code: Protein turtle homolog B (1328 aa).

An N-terminal signal peptide occupies residues 1-17; the sequence is MIWYVATLIASVISTRG. Over 18–722 the chain is Extracellular; it reads LVAQGAHGLR…DLTDDGLARP (705 aa). Ig-like domains lie at 30–115, 139–226, 228–320, 324–415, and 420–504; these read PEFV…ECKV, PTFT…LLVQ, PPFI…AYLT, PARV…ARLV, and PYFT…THLT. 2 disulfide bridges follow: cysteine 45-cysteine 113 and cysteine 161-cysteine 208. Asparagine 241 and asparagine 258 each carry an N-linked (GlcNAc...) asparagine glycan. 3 disulfide bridges follow: cysteine 250-cysteine 303, cysteine 346-cysteine 397, and cysteine 442-cysteine 488. 2 consecutive Fibronectin type-III domains span residues 512–604 and 614–708; these read APGS…TLAF and LVTP…STDI. N-linked (GlcNAc...) asparagine glycosylation occurs at asparagine 624. A helical membrane pass occupies residues 723 to 743; it reads VLAGIVATICFLAAAILFSTL. Over 744–1328 the chain is Cytoplasmic; it reads AACFVNKQRK…EPPTTLPTSG (585 aa). Disordered stretches follow at residues 758 to 817, 914 to 1040, and 1106 to 1328; these read RKKD…EKEL, PMSS…PEPW, and KSPG…PTSG. Phosphoserine occurs at positions 775, 783, and 794. A compositionally biased stretch (low complexity) spans 990-1001; that stretch reads SPLSSVMSSPPL. 3 stretches are compositionally biased toward polar residues: residues 1018 to 1033, 1129 to 1141, and 1199 to 1214; these read ENASNSTLPLTQTPTG, LVSQGQLRHTSQG, and SRLSPLTQSPLSSRTG. Arginine 1136 carries the post-translational modification Omega-N-methylarginine. Serine 1207 and serine 1215 each carry phosphoserine. The span at 1246–1273 shows a compositional bias: low complexity; that stretch reads SFSRKSTPSSTGSPSQSSRSGSPSYRPT. Pro residues-rich tracts occupy residues 1284 to 1295 and 1318 to 1328; these read PSPPPGPAPPAP and PEPPTTLPTSG.

The protein belongs to the immunoglobulin superfamily. Turtle family. Found in a complex with MAGI2 and NLGN2, where it interacts with MAGI2 (via PDZ 5 and PDZ 6 domains). Post-translationally, N-glycosylated and sialylated. Not significantly O-glycosylated. In terms of tissue distribution, detected in brain.

Its subcellular location is the cell membrane. The protein localises to the postsynaptic cell membrane. The protein resides in the postsynaptic density. Its function is as follows. Transmembrane protein which is abundantly expressed in interneurons, where it may regulate inhibitory synapse development. May mediate homophilic cell adhesion. The chain is Protein turtle homolog B from Mus musculus (Mouse).